The primary structure comprises 715 residues: NADH-ubiquinone oxidoreductase chain 5 (715 aa).

The next 17 helical transmembrane spans lie at 1–21 (MYLS…FFGR), 30–50 (LITC…FFEV), 81–101 (LTVA…IYSI), 119–139 (LFTF…MFVG), 140–160 (WEGV…RIAA), 177–197 (FLTI…YATV), 200–220 (LAPY…LIGA), 241–261 (TPVS…YLLM), 274–294 (LLLC…IGLF), 310–330 (LGMM…FHLI), 331–351 (NHAF…HAVA), 366–386 (LPLT…FPYM), 403–423 (FSFS…FTTL), 487–507 (GFFL…FGFI), 543–563 (TLFK…ALVL), 647–667 (IVTN…FTFI), and 668–688 (SLLE…LSLT).

The protein belongs to the complex I subunit 5 family.

The protein resides in the mitochondrion inner membrane. The enzyme catalyses a ubiquinone + NADH + 5 H(+)(in) = a ubiquinol + NAD(+) + 4 H(+)(out). Functionally, core subunit of the mitochondrial membrane respiratory chain NADH dehydrogenase (Complex I) that is believed to belong to the minimal assembly required for catalysis. Complex I functions in the transfer of electrons from NADH to the respiratory chain. The immediate electron acceptor for the enzyme is believed to be ubiquinone. This chain is NADH-ubiquinone oxidoreductase chain 5 (ndh-5), found in Neurospora crassa (strain ATCC 24698 / 74-OR23-1A / CBS 708.71 / DSM 1257 / FGSC 987).